The sequence spans 462 residues: Argininosuccinate lyase (462 aa).

Belongs to the lyase 1 family. Argininosuccinate lyase subfamily.

The protein localises to the cytoplasm. The enzyme catalyses 2-(N(omega)-L-arginino)succinate = fumarate + L-arginine. The protein operates within amino-acid biosynthesis; L-arginine biosynthesis; L-arginine from L-ornithine and carbamoyl phosphate: step 3/3. In Dechloromonas aromatica (strain RCB), this protein is Argininosuccinate lyase.